The sequence spans 556 residues: Oxygen-dependent choline dehydrogenase (556 aa).

4–33 (DYIIIGAGSAGNVLATRLTEDPNTTVLLLE) lines the FAD pocket. The Proton acceptor role is filled by histidine 473.

It belongs to the GMC oxidoreductase family. Requires FAD as cofactor.

It localises to the cell membrane. The catalysed reaction is choline + A = betaine aldehyde + AH2. The enzyme catalyses betaine aldehyde + NAD(+) + H2O = glycine betaine + NADH + 2 H(+). Its pathway is amine and polyamine biosynthesis; betaine biosynthesis via choline pathway; betaine aldehyde from choline (cytochrome c reductase route): step 1/1. In terms of biological role, involved in the biosynthesis of the osmoprotectant glycine betaine. Catalyzes the oxidation of choline to betaine aldehyde and betaine aldehyde to glycine betaine at the same rate. The polypeptide is Oxygen-dependent choline dehydrogenase (Escherichia coli O6:H1 (strain CFT073 / ATCC 700928 / UPEC)).